Reading from the N-terminus, the 253-residue chain is Major prion protein (253 aa).

Positions 1 to 22 (MANLGCWMLVLFVATWSNLGLC) are cleaved as a signal peptide. The interaction with ADGRG6 stretch occupies residues 23 to 38 (KKRPKPGGWNTGGSRY). The tract at residues 23–230 (KKRPKPGGWN…ESQAYYQRGS (208 aa)) is interaction with GRB2, ERI3 and SYN1. The disordered stretch occupies residues 25 to 108 (RPKPGGWNTG…WNKPSKPKTN (84 aa)). Repeat copies occupy residues 51–59 (PQGGGGWGQ), 60–67 (PHGGGWGQ), 68–75 (PHGGGWGQ), 76–83 (PHGGGWGQ), and 84–91 (PHGGGWGQ). Residues 51–91 (PQGGGGWGQPHGGGWGQPHGGGWGQPHGGGWGQPHGGGWGQ) are 5 X 8 AA tandem repeats of P-H-G-G-G-W-G-Q. The span at 52–95 (QGGGGWGQPHGGGWGQPHGGGWGQPHGGGWGQPHGGGWGQGGGT) shows a compositional bias: gly residues. Residues H61, G62, G63, H69, G70, G71, H77, G78, G79, H85, G86, and G87 each contribute to the Cu(2+) site. C179 and C214 are disulfide-bonded. N-linked (GlcNAc...) asparagine glycans are attached at residues N181 and N197. Residue S230 is the site of GPI-anchor amidated serine attachment. Positions 231 to 253 (SMVLFSSPPVILLISFLIFLIVG) are cleaved as a propeptide — removed in mature form.

Belongs to the prion family. Monomer and homodimer. Has a tendency to aggregate into amyloid fibrils containing a cross-beta spine, formed by a steric zipper of superposed beta-strands. Soluble oligomers may represent an intermediate stage on the path to fibril formation. Copper binding may promote oligomerization. Interacts with GRB2, APP, ERI3/PRNPIP and SYN1. Mislocalized cytosolically exposed PrP interacts with MGRN1; this interaction alters MGRN1 subcellular location and causes lysosomal enlargement. Interacts with APP. Interacts with KIAA1191. Interacts with ADGRG6.

Its subcellular location is the cell membrane. It localises to the golgi apparatus. In terms of biological role, its primary physiological function is unclear. May play a role in neuronal development and synaptic plasticity. May be required for neuronal myelin sheath maintenance. May promote myelin homeostasis through acting as an agonist for ADGRG6 receptor. May play a role in iron uptake and iron homeostasis. Soluble oligomers are toxic to cultured neuroblastoma cells and induce apoptosis (in vitro). Association with GPC1 (via its heparan sulfate chains) targets PRNP to lipid rafts. Also provides Cu(2+) or Zn(2+) for the ascorbate-mediated GPC1 deaminase degradation of its heparan sulfate side chains. The protein is Major prion protein (PRNP) of Pongo pygmaeus (Bornean orangutan).